The chain runs to 367 residues: Alanine racemase (367 aa).

K34 functions as the Proton acceptor; specific for D-alanine in the catalytic mechanism. Residue K34 is modified to N6-(pyridoxal phosphate)lysine. Substrate is bound at residue R129. Y251 serves as the catalytic Proton acceptor; specific for L-alanine. A substrate-binding site is contributed by M299.

The protein belongs to the alanine racemase family. Pyridoxal 5'-phosphate is required as a cofactor.

The enzyme catalyses L-alanine = D-alanine. It participates in amino-acid biosynthesis; D-alanine biosynthesis; D-alanine from L-alanine: step 1/1. Catalyzes the interconversion of L-alanine and D-alanine. May also act on other amino acids. This is Alanine racemase (alr) from Thiobacillus denitrificans (strain ATCC 25259 / T1).